The primary structure comprises 277 residues: Cell death abnormality protein 2 (277 aa).

An SH2 domain is found at 14–112; sequence FYFPGMSRED…EASLLSAYKK (99 aa). Residues 113-173 form the SH3 1 domain; that stretch reads PIIEVVVGTF…PANYVQVQSG (61 aa). The disordered stretch occupies residues 179 to 217; that stretch reads RISKGTSQSSIGSSGNGAERFSSTSTSSENAEAHPTLPT. Positions 182 to 206 are enriched in low complexity; the sequence is KGTSQSSIGSSGNGAERFSSTSTSS. Positions 214-275 constitute an SH3 2 domain; it reads TLPTTAKVTF…PFTYIRFNTA (62 aa).

This sequence belongs to the CRK family. In terms of assembly, interacts with ced-5 (via C-terminus which contains a candidate SH3-binding, proline-rich region). Forms a ternary complex with ced-5 and ced-12. Interacts (via SH-2 domain) with src-1 (when activated and phosphorylated at 'Tyr-416').

Required for cell migration and engulfment of cell corpses but not for programmed cell death/apoptosis. Also has a role in the migration of the 2 gonadal distal tip cells (DTCs). In Caenorhabditis briggsae, this protein is Cell death abnormality protein 2.